Consider the following 213-residue polypeptide: Urease accessory protein UreE (213 aa).

Residues 170–213 (EHHGHSHSHSHSHSHDHDHDHDHDHDHDHQHGPSCSHGHHHGHR) form a disordered region. A compositionally biased stretch (basic and acidic residues) spans 182–200 (HSHDHDHDHDHDHDHDHQH).

It belongs to the UreE family.

It localises to the cytoplasm. Its function is as follows. Involved in urease metallocenter assembly. Binds nickel. Probably functions as a nickel donor during metallocenter assembly. The sequence is that of Urease accessory protein UreE from Burkholderia mallei (strain NCTC 10229).